The primary structure comprises 219 residues: Melanoma-associated antigen H1 (219 aa).

Over residues 1–13 (MPRGRKSRRRRNA) the composition is skewed to basic residues. A disordered region spans residues 1–84 (MPRGRKSRRR…QKPSVPRSNF (84 aa)). The MAGE domain occupies 1-198 (MPRGRKSRRR…KDWPCNYDWD (198 aa)). Acidic residues predominate over residues 44–57 (PEDDLSGPEEDPST). Positions 58 to 74 (PEEASTTPEEASSTAQA) are enriched in low complexity. A Phosphotyrosine modification is found at tyrosine 195.

The chain is Melanoma-associated antigen H1 (MAGEH1) from Homo sapiens (Human).